A 711-amino-acid chain; its full sequence is Polyribonucleotide nucleotidyltransferase (711 aa).

Asp-486 and Asp-492 together coordinate Mg(2+). The 60-residue stretch at 553-612 folds into the KH domain; the sequence is PRIHTIKISTDKIKDVIGKGGSVIRALTEETGTTIEIEDDGTVKIAATDGEKAKYAIRRI. The 69-residue stretch at 622-690 folds into the S1 motif domain; that stretch reads GRIYNGKVTR…RQGRVRLSIK (69 aa). Residues 689-711 form a disordered region; sequence IKEATEQTQPAAAPEAPTSEQGE. Positions 694–711 are enriched in low complexity; sequence EQTQPAAAPEAPTSEQGE.

Belongs to the polyribonucleotide nucleotidyltransferase family. In terms of assembly, component of the RNA degradosome, which is a multiprotein complex involved in RNA processing and mRNA degradation. Mg(2+) is required as a cofactor.

It localises to the cytoplasm. The catalysed reaction is RNA(n+1) + phosphate = RNA(n) + a ribonucleoside 5'-diphosphate. Functionally, involved in mRNA degradation. Catalyzes the phosphorolysis of single-stranded polyribonucleotides processively in the 3'- to 5'-direction. This chain is Polyribonucleotide nucleotidyltransferase, found in Salmonella arizonae (strain ATCC BAA-731 / CDC346-86 / RSK2980).